A 394-amino-acid polypeptide reads, in one-letter code: 1-deoxy-D-xylulose 5-phosphate reductoisomerase (394 aa).

Residues Thr-10, Gly-11, Ser-12, Ile-13, Gly-38, Arg-39, Asn-40, and Asn-123 each contribute to the NADPH site. Lys-124 is a binding site for 1-deoxy-D-xylulose 5-phosphate. Glu-125 is a binding site for NADPH. Asp-149 is a Mn(2+) binding site. Ser-150, Glu-151, Ser-175, and His-198 together coordinate 1-deoxy-D-xylulose 5-phosphate. Glu-151 is a binding site for Mn(2+). Residue Gly-204 participates in NADPH binding. 4 residues coordinate 1-deoxy-D-xylulose 5-phosphate: Ser-211, Asn-216, Lys-217, and Glu-220. Residue Glu-220 coordinates Mn(2+).

The protein belongs to the DXR family. Mg(2+) is required as a cofactor. Requires Mn(2+) as cofactor.

The enzyme catalyses 2-C-methyl-D-erythritol 4-phosphate + NADP(+) = 1-deoxy-D-xylulose 5-phosphate + NADPH + H(+). It functions in the pathway isoprenoid biosynthesis; isopentenyl diphosphate biosynthesis via DXP pathway; isopentenyl diphosphate from 1-deoxy-D-xylulose 5-phosphate: step 1/6. Functionally, catalyzes the NADPH-dependent rearrangement and reduction of 1-deoxy-D-xylulose-5-phosphate (DXP) to 2-C-methyl-D-erythritol 4-phosphate (MEP). This is 1-deoxy-D-xylulose 5-phosphate reductoisomerase from Cereibacter sphaeroides (strain ATCC 17025 / ATH 2.4.3) (Rhodobacter sphaeroides).